We begin with the raw amino-acid sequence, 102 residues long: MKGQRIRIKLQGFDYRVIDQSALEIVETAKRSGARVSGPIPLPTRVEKLSVNRSPHVDKKSMEQFETRTHKRLIDIIEPTAQTVDELKKLNLPSGVDITINV.

Belongs to the universal ribosomal protein uS10 family. As to quaternary structure, part of the 30S ribosomal subunit.

Its function is as follows. Involved in the binding of tRNA to the ribosomes. The protein is Small ribosomal subunit protein uS10 of Opitutus terrae (strain DSM 11246 / JCM 15787 / PB90-1).